The sequence spans 92 residues: Co-chaperonin GroES (92 aa).

Belongs to the GroES chaperonin family. Heptamer of 7 subunits arranged in a ring. Interacts with the chaperonin GroEL.

Its subcellular location is the cytoplasm. In terms of biological role, together with the chaperonin GroEL, plays an essential role in assisting protein folding. The GroEL-GroES system forms a nano-cage that allows encapsulation of the non-native substrate proteins and provides a physical environment optimized to promote and accelerate protein folding. GroES binds to the apical surface of the GroEL ring, thereby capping the opening of the GroEL channel. This is Co-chaperonin GroES from Methanosarcina mazei (strain ATCC BAA-159 / DSM 3647 / Goe1 / Go1 / JCM 11833 / OCM 88) (Methanosarcina frisia).